The following is a 180-amino-acid chain: MIIYLHGFDSTSPGNHEKVLQLQFIDEDVRLISYSTLHPRHDMQHLLKQVDKMIQHSDDDRSLICGVGLGGFWAERVGFLCDIRQVIVNPNLFPQENMSGKIDRPEEYLDIATKCVANFREKNRDRCMVMLSRQDEMLDSQRSAQTLGEYYEIVWDDIQTHKFKSISPHLQRIKAFKTLG.

The protein belongs to the UPF0227 family.

The polypeptide is UPF0227 protein ECA1814 (Pectobacterium atrosepticum (strain SCRI 1043 / ATCC BAA-672) (Erwinia carotovora subsp. atroseptica)).